The primary structure comprises 332 residues: Zinc finger protein CONSTANS-LIKE 13 (332 aa).

Positions 13, 16, 36, 41, 56, 59, 79, and 84 each coordinate Zn(2+). The B box-type 1; atypical zinc-finger motif lies at C13–L55. The B box-type 2; atypical zinc-finger motif lies at C56–F96. The CCT domain occupies R287 to A329.

Belongs to the CONSTANS family.

The protein resides in the nucleus. The polypeptide is Zinc finger protein CONSTANS-LIKE 13 (COL13) (Arabidopsis thaliana (Mouse-ear cress)).